The primary structure comprises 2004 residues: Histone acetyltransferase KAT6A (2004 aa).

Residues 1–77 enclose the SAMD1-like winged helix (WH) domain; that stretch reads MVKLANPLYT…LNSYKDPDNP (77 aa). Residues 1-144 form a required for activation of RUNX1-1 region; that stretch reads MVKLANPLYT…FGGSAASGFH (144 aa). Positions 52 to 166 are required for nuclear localization; sequence ELSVKDGTIL…HGRLLKDGPL (115 aa). The 77-residue stretch at 95-171 folds into the H15 domain; sequence QNVDWNKLIK…KDGPLYRLNT (77 aa). An interaction with PML region spans residues 144 to 664; that stretch reads HQQLRLAIKR…RKGYGRFLID (521 aa). Residue lysine 172 is modified to N6-acetyllysine. 2 consecutive PHD-type zinc fingers follow at residues 206 to 265 and 259 to 313; these read IPIC…CKTC and CIEC…CRPR. Positions 312 to 664 are interaction with RUNX1-1; the sequence is PRKKGRKLLQ…RKGYGRFLID (353 aa). Residues 334-375 form a disordered region; sequence PIGRPKNRLKKQNTVSKGPFSKVRTGPGRGRKRKITLSSQSA. Lysine 350 and lysine 355 each carry N6-acetyllysine. Phosphothreonine; by PKB/AKT1 is present on threonine 369. Position 420 is a phosphoserine (serine 420). Positions 441–464 are disordered; it reads KRGNRKSSTSDWPTDNQDGWDGKQ. Polar residues predominate over residues 446 to 457; that stretch reads KSSTSDWPTDNQ. Position 473 is a phosphoserine (serine 473). Residues 488-778 form a catalytic region; sequence IQEQALQKVG…VDPECLRWTP (291 aa). An MYST-type HAT domain is found at 504–778; sequence PQVRCPSVIE…VDPECLRWTP (275 aa). A mediates interaction with BRPF1, required for histone H3 acetyltransferase activity region spans residues 507 to 810; that stretch reads RCPSVIEFGK…EPQCQERELE (304 aa). The C2HC MYST-type zinc-finger motif lies at 537–562; it reads LYLCEFCLKYMKSRTILQQHMKKCGW. Lysine 604 carries the post-translational modification N6-acetyllysine; by autocatalysis. Acetyl-CoA-binding positions include 645-649 and 654-660; these read SCIMI and QRKGYGR. Glutamate 680 functions as the Proton donor/acceptor in the catalytic mechanism. Residue serine 684 coordinates acetyl-CoA. 3 disordered regions span residues 785–1445, 1461–1621, and 1637–1721; these read VVSE…AYQD, QADE…MMQQ, and SCVV…MEIP. Serine 787 and serine 812 each carry phosphoserine. Acidic residues predominate over residues 787-803; the sequence is SEEEEEEAEEGENEEPQ. Lysine 815 carries the N6-acetyllysine modification. Basic and acidic residues predominate over residues 817-836; the sequence is VSHENKEQDSYSVESEKKPE. Lysine 834 is covalently cross-linked (Glycyl lysine isopeptide (Lys-Gly) (interchain with G-Cter in SUMO2)). Residues 864–873 are compositionally biased toward basic residues; that stretch reads RRGRWGRKNR. Over residues 874–888 the composition is skewed to basic and acidic residues; the sequence is KTQERFGDKDSKLLL. Tyrosine 899 carries the post-translational modification Phosphotyrosine. 2 stretches are compositionally biased toward basic and acidic residues: residues 931–942 and 953–980; these read GKPDLPKRRLSE and KSPE…DRAV. A phosphoserine mark is found at serine 941, serine 954, and serine 974. Lysine 1007 is modified (N6-acetyllysine). A compositionally biased stretch (basic residues) spans 1009–1030; sequence TLKRKKPFLHRRRRVRKRKHHN. Residues 1031 to 1042 show a composition bias toward low complexity; the sequence is SSVVTETISETT. 2 stretches are compositionally biased toward acidic residues: residues 1043–1053 and 1065–1078; these read EVLDEPFEDSD and FEID…DENE. A phosphoserine mark is found at serine 1089, serine 1090, and serine 1113. Positions 1107–1118 are enriched in acidic residues; that stretch reads EEEDEESDDADD. Residues 1146–1172 are compositionally biased toward basic residues; sequence LKKKKGWPKGKSRKPIHWKKRPGRKPG. Over residues 1203 to 1223 the composition is skewed to basic and acidic residues; that stretch reads KIQESEETVEPKEDMPLPEER. The segment covering 1224–1245 has biased composition (acidic residues); sequence KEEEEMQAEAEEAEEGEEEDAA. Low complexity predominate over residues 1246-1262; sequence SSEVPAASPADSSNSPE. A compositionally biased stretch (basic and acidic residues) spans 1275 to 1287; it reads EKPRVSEEQRQSE. Over residues 1288–1305 the composition is skewed to acidic residues; sequence EEQQELEEPEPEEEEDAA. 3 stretches are compositionally biased toward basic and acidic residues: residues 1323 to 1345, 1358 to 1367, and 1398 to 1420; these read HLES…KEEP, KSREKIKDKE, and EDSH…HSEL. Lysine 1342 is covalently cross-linked (Glycyl lysine isopeptide (Lys-Gly) (interchain with G-Cter in SUMO2)). Positions 1481-1503 are enriched in low complexity; the sequence is SPISSVQSHPSQSVRSVSSPNVP. Residues 1508 to 1529 show a composition bias toward polar residues; the sequence is GYTQISPEQGSLSAPSMQNMET. Positions 1517–1642 are interaction with RUNX1-2; it reads GSLSAPSMQN…KSPQSCVVER (126 aa). Positions 1517-1741 are interaction with PML; it reads GSLSAPSMQN…YERIPGDFGA (225 aa). The segment covering 1534–1548 has biased composition (low complexity); that stretch reads DVPSVSDHSQQVVDS. The segment covering 1556 to 1573 has biased composition (polar residues); sequence IESTTENYENPSSYDSTM. A compositionally biased stretch (low complexity) spans 1574–1621; the sequence is GGSICGNSSSQSSCSYGGLSSSSSLTQSSCVVTQQMASMGSSCSMMQQ. Residues 1650–1699 are compositionally biased toward pro residues; sequence QPPPPPPQQPQPPPPQPQPAPQPPPPQQQPQQQPQPQPQQPPPPPPPQQQ. Polar residues predominate over residues 1702–1712; it reads LSQCSMNNSFT. A required for activation of RUNX1-2 region spans residues 1913-1948; the sequence is SMNMNTLNAMNSYRMTQPMMNSSYHSNPAYMNQTAQ.

Belongs to the MYST (SAS/MOZ) family. As to quaternary structure, component of the MOZ/MORF complex composed at least of ING5, KAT6A, KAT6B, MEAF6 and one of BRPF1, BRD1/BRPF2 and BRPF3. Interacts with RUNX1; phosphorylation of RUNX1 enhances the interaction. Interacts with RUNX2. Interacts with p53/TP53. Interacts with PML (isoform PML-4) and this interaction positively regulates its acetylation activity towards p53/TP53. Autoacetylation at Lys-604 is required for proper function. Autoacetylated. In terms of processing, phosphorylation at Thr-369 by PKB/AKT1 inhibits its interaction with PML and negatively regulates its acetylation activity towards p53/TP53.

It localises to the nucleus. It is found in the nucleolus. The protein localises to the nucleoplasm. The protein resides in the PML body. It catalyses the reaction L-lysyl-[protein] + acetyl-CoA = N(6)-acetyl-L-lysyl-[protein] + CoA + H(+). Its function is as follows. Histone acetyltransferase that acetylates lysine residues in histone H3 and histone H4 (in vitro). Component of the MOZ/MORF complex which has a histone H3 acetyltransferase activity. May act as a transcriptional coactivator for RUNX1 and RUNX2. Acetylates p53/TP53 at 'Lys-120' and 'Lys-382' and controls its transcriptional activity via association with PML. The sequence is that of Histone acetyltransferase KAT6A (KAT6A) from Homo sapiens (Human).